The primary structure comprises 713 residues: Early transcription factor 82 kDa subunit (713 aa).

Belongs to the poxviridae VETF large subunit family. As to quaternary structure, heterodimer of a 70 kDa and a 82 kDa subunit. Part of the early transcription complex composed of ETF, RAP94, and the DNA-directed RNA polymerase.

Acts with RNA polymerase to initiate transcription from early gene promoters. Is recruited by the RPO-associated protein of 94 kDa (RAP94) to form the early transcription complex, which also contains the core RNA polymerase. ETF heterodimer binds to early gene promoters. This is Early transcription factor 82 kDa subunit (VETFL) from Yaba monkey tumor virus (strain VR587) (YMTV).